The sequence spans 357 residues: Ubiquitin carboxyl-terminal hydrolase 2 (357 aa).

The USP domain occupies 19 to 351 (TGLRNLGNTC…DAYLLFYELA (333 aa)). Cys28 acts as the Nucleophile in catalysis. Residues Cys177, Cys180, Cys228, and Cys231 each contribute to the Zn(2+) site. Residue His309 is the Proton acceptor of the active site.

Belongs to the peptidase C19 family. USP2 subfamily. As to quaternary structure, homooligomer.

Its subcellular location is the cytoplasm. It is found in the perinuclear region. The enzyme catalyses Thiol-dependent hydrolysis of ester, thioester, amide, peptide and isopeptide bonds formed by the C-terminal Gly of ubiquitin (a 76-residue protein attached to proteins as an intracellular targeting signal).. Hydrolase that deubiquitinates polyubiquitinated target proteins such as MDM2, MDM4 and CCND1. Possesses both ubiquitin-specific peptidase and isopeptidase activities. May play a role in the regulation of the circadian clock. The sequence is that of Ubiquitin carboxyl-terminal hydrolase 2 (USP2) from Gallus gallus (Chicken).